The chain runs to 370 residues: F-box protein At3g20690 (370 aa).

The 45-residue stretch at 1–45 (MMMSDLPHDLVEEILSRLPLISLKAMRSTCKTWNVLSKHRSFANK) folds into the F-box domain.

The protein is F-box protein At3g20690 of Arabidopsis thaliana (Mouse-ear cress).